A 395-amino-acid chain; its full sequence is LIM/homeobox protein Lhx3 (395 aa).

2 consecutive LIM zinc-binding domains span residues 28-78 and 87-141; these read CAGC…CKED and CAAC…CKAD. A DNA-binding region (homeobox) is located at residues 154 to 213; sequence AKRPRTTITAKQLETLKNAYNNSPKPARHVREQLSSETGLDMRVVQVWFQNRRAKEKRLK. Disordered regions lie at residues 209–325 and 348–395; these read EKRL…LQAL and GGQG…HAQF. The span at 257 to 276 shows a compositional bias: polar residues; it reads DEPSMSEMSHSNGIYSNLSE.

The protein localises to the nucleus. In terms of biological role, transcription factor. Defines subclasses of motoneurons that segregate into columns in the spinal cord and select distinct axon pathways. Acts in conjunction with LIM-1, ISL-1 and ISL-2. The chain is LIM/homeobox protein Lhx3 (LHX3) from Gallus gallus (Chicken).